Here is a 418-residue protein sequence, read N- to C-terminus: Glutamyl-tRNA reductase (418 aa).

Residues 49–52 (TCNR), Ser109, 114–116 (EPQ), and Gln120 contribute to the substrate site. Cys50 (nucleophile) is an active-site residue. 189 to 194 (GAGETI) serves as a coordination point for NADP(+).

This sequence belongs to the glutamyl-tRNA reductase family. Homodimer.

The enzyme catalyses (S)-4-amino-5-oxopentanoate + tRNA(Glu) + NADP(+) = L-glutamyl-tRNA(Glu) + NADPH + H(+). It participates in porphyrin-containing compound metabolism; protoporphyrin-IX biosynthesis; 5-aminolevulinate from L-glutamyl-tRNA(Glu): step 1/2. Functionally, catalyzes the NADPH-dependent reduction of glutamyl-tRNA(Glu) to glutamate 1-semialdehyde (GSA). This is Glutamyl-tRNA reductase from Escherichia coli O139:H28 (strain E24377A / ETEC).